The following is a 1022-amino-acid chain: Integrator complex subunit 4 (1022 aa).

1D-myo-inositol hexakisphosphate-binding residues include T148 and K184. The disordered stretch occupies residues 818 to 840 (KDEEEKPPVVETDMPMKESVSRD).

Belongs to the Integrator subunit 4 family. Belongs to the multiprotein complex Integrator, at least composed of IntS1, IntS2, IntS3, IntS4, omd/IntS5, IntS6, defl/IntS7, IntS8, IntS9, IntS10, IntS11, IntS12, asun/IntS13, IntS14 and IntS15. The core complex associates with protein phosphatase 2A subunits mts/PP2A and Pp2A-29B, to form the Integrator-PP2A (INTAC) complex. IntS4 is part of the RNA endonuclease subcomplex, composed of IntS4, IntS9, IntS11 and inositol hexakisphosphate (InsP6).

The protein resides in the nucleus. Its function is as follows. Component of the integrator complex, a multiprotein complex that terminates RNA polymerase II (Pol II) transcription in the promoter-proximal region of genes. The integrator complex provides a quality checkpoint during transcription elongation by driving premature transcription termination of transcripts that are unfavorably configured for transcriptional elongation: the complex terminates transcription by (1) catalyzing dephosphorylation of the C-terminal domain (CTD) of Pol II subunit Polr2A/Rbp1 and Spt5, and (2) degrading the exiting nascent RNA transcript via endonuclease activity. The integrator complex is also involved in the 3'-end processing of the U7 snRNA, and also the spliceosomal snRNAs U1, U2, U4 and U5. The sequence is that of Integrator complex subunit 4 from Drosophila melanogaster (Fruit fly).